A 240-amino-acid chain; its full sequence is Tumor protein p53-inducible nuclear protein 1 (240 aa).

The short motif at 25 to 37 (EKEDDEWILVDFI) is the LIR element.

In terms of assembly, interacts with p53/TP53 and HIPK2. Interacts with PRKCG, GABARAP, GABARAPL1, GABARAPL2, MAP1LC3A, MAP1LC3B and MAP1LC3C. Ubiquitously expressed.

Its subcellular location is the cytoplasm. The protein resides in the cytosol. The protein localises to the nucleus. It is found in the PML body. It localises to the cytoplasmic vesicle. Its subcellular location is the autophagosome. In terms of biological role, antiproliferative and proapoptotic protein involved in cell stress response which acts as a dual regulator of transcription and autophagy. Acts as a positive regulator of autophagy. In response to cellular stress or activation of autophagy, relocates to autophagosomes where it interacts with autophagosome-associated proteins GABARAP, GABARAPL1/L2, MAP1LC3A/B/C and regulates autophagy. Acts as an antioxidant and plays a major role in p53/TP53-driven oxidative stress response. Possesses both a p53/TP53-independent intracellular reactive oxygen species (ROS) regulatory function and a p53/TP53-dependent transcription regulatory function. Positively regulates p53/TP53 and p73/TP73 and stimulates their capacity to induce apoptosis and regulate cell cycle. In response to double-strand DNA breaks, promotes p53/TP53 phosphorylation on 'Ser-46' and subsequent apoptosis. Acts as a tumor suppressor by inducing cell death by an autophagy and caspase-dependent mechanism. Can reduce cell migration by regulating the expression of SPARC. In Homo sapiens (Human), this protein is Tumor protein p53-inducible nuclear protein 1 (TP53INP1).